Consider the following 271-residue polypeptide: Elongation factor Ts (271 aa).

Residues 76–79 (TDFV) form an involved in Mg(2+) ion dislocation from EF-Tu region.

The protein belongs to the EF-Ts family.

The protein resides in the cytoplasm. In terms of biological role, associates with the EF-Tu.GDP complex and induces the exchange of GDP to GTP. It remains bound to the aminoacyl-tRNA.EF-Tu.GTP complex up to the GTP hydrolysis stage on the ribosome. This chain is Elongation factor Ts, found in Mycolicibacterium vanbaalenii (strain DSM 7251 / JCM 13017 / BCRC 16820 / KCTC 9966 / NRRL B-24157 / PYR-1) (Mycobacterium vanbaalenii).